The primary structure comprises 992 residues: UPF0182 protein BCG_3215c (992 aa).

A run of 7 helical transmembrane segments spans residues 18 to 38 (ILIM…RLID), 63 to 83 (IVVC…GLAL), 113 to 133 (LVGI…AQSY), 175 to 195 (LVSV…FGGI), 210 to 230 (VQLV…YWLD), 259 to 279 (KLIL…AIAL), and 287 to 307 (IGLV…PLIV). The tract at residues 906–938 (PTEAAVPPSPAANPPPPASGPQPPPVTAAPPVP) is disordered. The segment covering 912–938 (PPSPAANPPPPASGPQPPPVTAAPPVP) has biased composition (pro residues).

Belongs to the UPF0182 family.

It is found in the cell membrane. The protein is UPF0182 protein BCG_3215c of Mycobacterium bovis (strain BCG / Pasteur 1173P2).